The primary structure comprises 772 residues: Probable beta-glucosidase M (772 aa).

An N-terminal signal peptide occupies residues 1–20; the sequence is MLTSWGKTGFVLALALGGRA. The N-linked (GlcNAc...) asparagine glycan is linked to N259. The active site involves D287. 7 N-linked (GlcNAc...) asparagine glycosylation sites follow: N315, N322, N438, N523, N547, N574, and N586.

This sequence belongs to the glycosyl hydrolase 3 family.

It localises to the secreted. It catalyses the reaction Hydrolysis of terminal, non-reducing beta-D-glucosyl residues with release of beta-D-glucose.. Its pathway is glycan metabolism; cellulose degradation. In terms of biological role, beta-glucosidases are one of a number of cellulolytic enzymes involved in the degradation of cellulosic biomass. Catalyzes the last step releasing glucose from the inhibitory cellobiose. The polypeptide is Probable beta-glucosidase M (bglM) (Emericella nidulans (strain FGSC A4 / ATCC 38163 / CBS 112.46 / NRRL 194 / M139) (Aspergillus nidulans)).